The following is a 70-amino-acid chain: DNA gyrase inhibitor YacG (70 aa).

Positions 7, 10, 26, and 30 each coordinate Zn(2+).

This sequence belongs to the DNA gyrase inhibitor YacG family. As to quaternary structure, interacts with GyrB. Zn(2+) serves as cofactor.

Functionally, inhibits all the catalytic activities of DNA gyrase by preventing its interaction with DNA. Acts by binding directly to the C-terminal domain of GyrB, which probably disrupts DNA binding by the gyrase. The protein is DNA gyrase inhibitor YacG of Shewanella woodyi (strain ATCC 51908 / MS32).